We begin with the raw amino-acid sequence, 372 residues long: N-methyl-L-tryptophan oxidase (372 aa).

4–34 (DLIIIGSGSVGAAAGYYATRAGLNVLMTDAH) contributes to the FAD binding site. Position 308 is an S-8alpha-FAD cysteine (C308).

The protein belongs to the MSOX/MTOX family. MTOX subfamily. As to quaternary structure, monomer. The cofactor is FAD.

The enzyme catalyses N(alpha)-methyl-L-tryptophan + O2 + H2O = L-tryptophan + formaldehyde + H2O2. Catalyzes the oxidative demethylation of N-methyl-L-tryptophan. The protein is N-methyl-L-tryptophan oxidase of Escherichia coli O157:H7.